The chain runs to 309 residues: Ribose-phosphate pyrophosphokinase (309 aa).

ATP is bound by residues 37-39 and 96-97; these read DGE and RQ. Mg(2+)-binding residues include His130 and Asp169. The active site involves Lys192. Residues Arg194, Asp218, and 222–226 each bind D-ribose 5-phosphate; that span reads DTAGT.

The protein belongs to the ribose-phosphate pyrophosphokinase family. Class I subfamily. In terms of assembly, homohexamer. The cofactor is Mg(2+).

The protein localises to the cytoplasm. The catalysed reaction is D-ribose 5-phosphate + ATP = 5-phospho-alpha-D-ribose 1-diphosphate + AMP + H(+). Its pathway is metabolic intermediate biosynthesis; 5-phospho-alpha-D-ribose 1-diphosphate biosynthesis; 5-phospho-alpha-D-ribose 1-diphosphate from D-ribose 5-phosphate (route I): step 1/1. In terms of biological role, involved in the biosynthesis of the central metabolite phospho-alpha-D-ribosyl-1-pyrophosphate (PRPP) via the transfer of pyrophosphoryl group from ATP to 1-hydroxyl of ribose-5-phosphate (Rib-5-P). The protein is Ribose-phosphate pyrophosphokinase of Wolinella succinogenes (strain ATCC 29543 / DSM 1740 / CCUG 13145 / JCM 31913 / LMG 7466 / NCTC 11488 / FDC 602W) (Vibrio succinogenes).